Reading from the N-terminus, the 115-residue chain is Phosphorelay protein LuxU (115 aa).

One can recognise an HPt domain in the interval 17–107 (GADNVPVLLE…DRLHQTQQAY (91 aa)). His-56 carries the post-translational modification Phosphohistidine.

Monomer.

Its function is as follows. Phosphorelay protein which receives a sensory signal from a sensor kinase and transmit it to LuxO. At low cell density, a phosphoryl group is transferred from the sensor kinase, probably on His-56 and this phosphoryl group is further transferred to LuxO. The protein is Phosphorelay protein LuxU (luxU) of Vibrio vulnificus (strain CMCP6).